A 303-amino-acid chain; its full sequence is RELT-like protein 2 (303 aa).

Residues 15–35 (LYMLFLLVLVFFLMGLVGFMI) traverse the membrane as a helical segment. Disordered regions lie at residues 47–68 (RTSR…DDVN), 135–214 (CSRS…QPRT), and 249–303 (PCTL…AGGM). Phosphoserine is present on Ser52. 2 stretches are compositionally biased toward basic and acidic residues: residues 148-158 (RSKEGKSRPRP) and 172-188 (THIE…DGSP). Over residues 194-212 (GSGGGQEPGGSQAAGGGQP) the composition is skewed to gly residues. Over residues 274-295 (GLSSQEANGQPTKLDTSGQQES) the composition is skewed to polar residues.

This sequence belongs to the RELT family. In terms of assembly, interacts with RELT, RELL1, OXSR1, PLSCR1 and TRAF2.

It localises to the cell membrane. In terms of biological role, induces activation of MAPK14/p38 cascade, when overexpressed. Induces apoptosis, when overexpressed. In Mus musculus (Mouse), this protein is RELT-like protein 2 (Rell2).